The chain runs to 413 residues: NPL4-like protein 1 (413 aa).

Ser-104 carries the phosphoserine modification. In terms of domain architecture, MPN spans 131-272 (SVSFDRDCAN…ADVHFEPFQM (142 aa)).

The protein belongs to the NPL4 family.

It functions in the pathway protein degradation; proteasomal ubiquitin-dependent pathway. Its function is as follows. May be part of a complex that binds ubiquitinated proteins and that is necessary for the export of misfolded proteins from the ER to the cytoplasm, where they are degraded by the proteasome. The polypeptide is NPL4-like protein 1 (Arabidopsis thaliana (Mouse-ear cress)).